A 359-amino-acid chain; its full sequence is 4-galactosyl-N-acetylglucosaminide 3-alpha-L-fucosyltransferase 9 (359 aa).

At 1-11 (MTSASKGILRP) the chain is on the cytoplasmic side. A helical; Signal-anchor for type II membrane protein membrane pass occupies residues 12–32 (FLIVCIILGCFMACLLIYIKP). Residues 33–359 (TNSWIFSPME…VGNLEKWFWN (327 aa)) are Lumenal-facing. Asn62 carries N-linked (GlcNAc...) asparagine glycosylation. The tract at residues 63–168 (ETTILIWVWP…RRDSDIQVPY (106 aa)) is acceptor-binding. Gln75 contacts a beta-D-galactosyl-(1-&gt;4)-N-acetyl-beta-D-glucosaminyl derivative. 3 cysteine pairs are disulfide-bonded: Cys82-Cys335, Cys91-Cys338, and Cys190-Cys238. The N-linked (GlcNAc...) asparagine glycan is linked to Asn101. Glu137 provides a ligand contact to a beta-D-galactosyl-(1-&gt;4)-N-acetyl-beta-D-glucosaminyl derivative. Glu137 functions as the Nucleophile in the catalytic mechanism. Glu137 contributes to the GDP-beta-L-fucose binding site. Residue Asn153 is glycosylated (N-linked (GlcNAc...) asparagine). The GDP-beta-L-fucose site is built by Tyr168, Val192, Ser194, Asn195, Arg202, Val226, Tyr241, Asn246, Tyr252, Glu255, and Lys256. A donor-binding region spans residues 169 to 326 (GFLTVSTNPF…NWRKDFTVNL (158 aa)). The segment at 327 to 359 (PRFWESHACLACDHVKRHQEYKSVGNLEKWFWN) is acceptor-binding.

This sequence belongs to the glycosyltransferase 10 family. As to quaternary structure, homodimer. N-glycosylated with complex-type N-glycans.

It localises to the golgi apparatus. Its subcellular location is the trans-Golgi network membrane. It is found in the golgi apparatus membrane. The catalysed reaction is a beta-D-galactosyl-(1-&gt;4)-N-acetyl-beta-D-glucosaminyl derivative + GDP-beta-L-fucose = a beta-D-galactosyl-(1-&gt;4)-[alpha-L-fucosyl-(1-&gt;3)]-N-acetyl-beta-D-glucosaminyl derivative + GDP + H(+). It carries out the reaction an alpha-Neu5Ac-(2-&gt;3)-beta-D-Gal-(1-&gt;4)-beta-D-GlcNAc-(1-&gt;3)-beta-D-Gal-(1-&gt;4)-beta-D-GlcNAc derivative + GDP-beta-L-fucose = an alpha-Neu5Ac-(2-&gt;3)-beta-D-Gal-(1-&gt;4)-beta-D-GlcNAc-(1-&gt;3)-beta-D-Gal-(1-&gt;4)-[alpha-L-Fuc-(1-&gt;3)]-beta-D-GlcNAc derivative + GDP + H(+). The enzyme catalyses alpha-N-glycoloylneuraminosyl-(2-&gt;3)-beta-D-galactosyl-(1-&gt;4)-N-acetyl-beta-D-glucosaminyl-(1-&gt;3)-beta-D-galactosyl-(1-&gt;4)-N-acetyl-beta-D-glucosaminyl-(1-&gt;3)-beta-D-galactosyl-(1-&gt;4)-beta-D-glucosyl-(1&lt;-&gt;1')-ceramide + GDP-beta-L-fucose = alpha-N-glycoloylneuraminosyl-(2-&gt;3)-beta-D-galactosyl-(1-&gt;4)-N-acetyl-beta-D-glucosaminyl-(1-&gt;3)-beta-D-galactosyl-(1-&gt;4)-[alpha-L-fucosyl-(1-&gt;3)]-N-acetyl-beta-D-glucosaminyl-(1-&gt;3)-beta-D-galactosyl-(1-&gt;4)-beta-D-glucosyl-(1&lt;-&gt;1')-ceramide + GDP + H(+). It catalyses the reaction alpha-D-galactosyl-(1-&gt;3)-beta-D-galactosyl-(1-&gt;4)-N-acetyl-beta-D-glucosaminyl-(1-&gt;3)-beta-D-galactosyl-(1-&gt;4)-beta-D-glucosyl-(1&lt;-&gt;1')-ceramide + GDP-beta-L-fucose = a neolactoside IV(3)-alpha-Gal,III(3)-alpha-Fuc-nLc4Cer + GDP + H(+). The catalysed reaction is a neolactoside nLc4Cer + GDP-beta-L-fucose = a neolactoside III(3)-alpha-Fuc-nLc4Cer + GDP + H(+). It carries out the reaction an N-acetyl-alpha-neuraminyl-(2-&gt;3)-beta-D-galactosyl-(1-&gt;4)-N-acetyl-beta-D-glucosaminyl derivative + GDP-beta-L-fucose = an alpha-Neu5Ac-(2-&gt;3)-beta-D-Gal-(1-&gt;4)-[alpha-L-Fuc-(1-&gt;3)]-beta-D-GlcNAc derivative + GDP + H(+). The enzyme catalyses beta-D-Gal-(1-&gt;4)-beta-D-GlcNAc-(1-&gt;3)-beta-D-Gal-(1-&gt;4)-D-Glc + GDP-beta-L-fucose = beta-D-Gal-(1-&gt;4)-[alpha-L-Fuc-(1-&gt;3)]-beta-D-GlcNAc-(1-&gt;3)-beta-D-Gal-(1-&gt;4)-D-Glc + GDP + H(+). It catalyses the reaction an alpha-L-Fuc-(1-&gt;2)-beta-D-Gal-(1-&gt;4)-beta-D-GlcNAc derivative + GDP-beta-L-fucose = an alpha-L-Fuc-(1-&gt;2)-beta-D-Gal-(1-&gt;4)-[alpha-L-Fuc-(1-&gt;3)]-beta-D-GlcNAc derivative + GDP + H(+). It functions in the pathway protein modification; protein glycosylation. Its pathway is glycolipid biosynthesis. Activated by Mn2+. Functionally, catalyzes alpha(1-&gt;3) linkage of fucosyl moiety transferred from GDP-beta-L-fucose to N-acetyl glucosamine (GlcNAc) within type 2 lactosamine (LacNAc, beta-D-Gal-(1-&gt;4)-beta-D-GlcNAc-) glycan attached to glycolipids and N- or O-linked glycoproteins. Fucosylates distal type 2 LacNAc and its fucosylated (H-type 2 LacNAc) and sialylated (sialyl-type 2 LacNAc) derivatives to form Lewis x (Lex) (CD15) and Lewis y (Ley) antigenic epitopes involved in cell adhesion and differentiation. Generates Lex epitopes in the brain, presumably playing a role in the maintenance of neuronal stemness and neurite outgrowth in progenitor neural cells. Fucosylates the internal type 2 LacNAc unit of the polylactosamine chain to form VIM-2 antigen that serves as recognition epitope for SELE. Can also modify milk oligosaccharides in particular type 2 tetrasaccharide LNnT. In Canis lupus familiaris (Dog), this protein is 4-galactosyl-N-acetylglucosaminide 3-alpha-L-fucosyltransferase 9.